The sequence spans 308 residues: 4-hydroxy-3-methylbut-2-enyl diphosphate reductase 2 (308 aa).

Cys-12 is a binding site for [4Fe-4S] cluster. (2E)-4-hydroxy-3-methylbut-2-enyl diphosphate is bound by residues His-41 and His-74. Dimethylallyl diphosphate contacts are provided by His-41 and His-74. Isopentenyl diphosphate contacts are provided by His-41 and His-74. A [4Fe-4S] cluster-binding site is contributed by Cys-96. Position 124 (His-124) interacts with (2E)-4-hydroxy-3-methylbut-2-enyl diphosphate. His-124 serves as a coordination point for dimethylallyl diphosphate. His-124 serves as a coordination point for isopentenyl diphosphate. Glu-126 serves as the catalytic Proton donor. Thr-164 serves as a coordination point for (2E)-4-hydroxy-3-methylbut-2-enyl diphosphate. [4Fe-4S] cluster is bound at residue Cys-194. Residues Ser-222, Ser-223, Asn-224, and Ser-266 each contribute to the (2E)-4-hydroxy-3-methylbut-2-enyl diphosphate site. 4 residues coordinate dimethylallyl diphosphate: Ser-222, Ser-223, Asn-224, and Ser-266. Isopentenyl diphosphate-binding residues include Ser-222, Ser-223, Asn-224, and Ser-266.

It belongs to the IspH family. The cofactor is [4Fe-4S] cluster.

The catalysed reaction is isopentenyl diphosphate + 2 oxidized [2Fe-2S]-[ferredoxin] + H2O = (2E)-4-hydroxy-3-methylbut-2-enyl diphosphate + 2 reduced [2Fe-2S]-[ferredoxin] + 2 H(+). It carries out the reaction dimethylallyl diphosphate + 2 oxidized [2Fe-2S]-[ferredoxin] + H2O = (2E)-4-hydroxy-3-methylbut-2-enyl diphosphate + 2 reduced [2Fe-2S]-[ferredoxin] + 2 H(+). It participates in isoprenoid biosynthesis; dimethylallyl diphosphate biosynthesis; dimethylallyl diphosphate from (2E)-4-hydroxy-3-methylbutenyl diphosphate: step 1/1. It functions in the pathway isoprenoid biosynthesis; isopentenyl diphosphate biosynthesis via DXP pathway; isopentenyl diphosphate from 1-deoxy-D-xylulose 5-phosphate: step 6/6. Functionally, catalyzes the conversion of 1-hydroxy-2-methyl-2-(E)-butenyl 4-diphosphate (HMBPP) into a mixture of isopentenyl diphosphate (IPP) and dimethylallyl diphosphate (DMAPP). Acts in the terminal step of the DOXP/MEP pathway for isoprenoid precursor biosynthesis. In Bradyrhizobium diazoefficiens (strain JCM 10833 / BCRC 13528 / IAM 13628 / NBRC 14792 / USDA 110), this protein is 4-hydroxy-3-methylbut-2-enyl diphosphate reductase 2.